We begin with the raw amino-acid sequence, 1827 residues long: Chromodomain-helicase-DNA-binding protein 2 (1827 aa).

Basic and acidic residues predominate over residues 1–14; that stretch reads MMRNKDKSQEEDSS. Positions 1–264 are disordered; sequence MMRNKDKSQE…EQQDNSETIE (264 aa). A compositionally biased stretch (low complexity) spans 15–75; the sequence is LHSNASSRSA…SESESAGSKS (61 aa). Basic and acidic residues-rich tracts occupy residues 81–101, 115–128, and 146–155; these read EAKEKPASKKERIADVKKMWE, SRQEPSRFNVKEEA, and KKQEKWKQDP. Residues 175-204 show a composition bias toward basic residues; that stretch reads GKARRPVPRRTVPKPQVKKQPKIQRGKRKK. Phosphoserine occurs at positions 207 and 208. Acidic residues predominate over residues 234 to 258; that stretch reads EDDDFETDSDDLIEMTGEGGDEQQD. Residue threonine 240 is modified to Phosphothreonine. Position 242 is a phosphoserine (serine 242). Chromo domains follow at residues 261–353 and 378–456; these read ETIE…QWLG and QIVE…IPTR. The 171-residue stretch at 496 to 666 folds into the Helicase ATP-binding domain; the sequence is AHSWCKSNSV…WSLLHFIMPE (171 aa). An ATP-binding site is contributed by 509–516; that stretch reads DEMGLGKT. The short motif at 617-620 is the DEAH box element; sequence DEAH. Residues 795-946 form the Helicase C-terminal domain; the sequence is LLDKLLTRLR…HLVIQRMDTT (152 aa). Disordered stretches follow at residues 1030 to 1124, 1329 to 1465, 1556 to 1638, and 1679 to 1827; these read EDEE…RSVR, GTVA…DDLD, HKKR…ADRG, and HMDA…VRKT. Positions 1037–1065 are enriched in basic and acidic residues; the sequence is ERPHKDWDEIIPEEQRKKVEEEERQKELE. 4 positions are modified to phosphoserine: serine 1085, serine 1087, serine 1365, and serine 1386. Basic and acidic residues predominate over residues 1347–1371; that stretch reads KKENKAPRLKDEHGLEPASPRHSDN. 2 stretches are compositionally biased toward basic and acidic residues: residues 1396 to 1431 and 1565 to 1574; these read ENKENKEKPVSSRKDREGDKERKKSKDKKEKVKGGD and EQKKKDDSLG. The CHD1 helical C-terminal domain (CHCT) stretch occupies residues 1464–1566; sequence LDQETFSICK…KKRSQEEEEQ (103 aa). The span at 1584–1601 shows a compositional bias: polar residues; it reads SGSSRDSLISQSHTSHNL. Composition is skewed to basic and acidic residues over residues 1697-1719, 1738-1748, 1759-1771, and 1794-1813; these read RPYEQYNSDRDHRGHRDYYDRHH, QDFRRMSDHRP, DHYRSFHTDKLGE, and SPHDSKSPLDHRSPLERSLE. Residue serine 1806 is modified to Phosphoserine.

As to quaternary structure, interacts with MYOD1. Interacts with histone H3.3. Widely expressed.

The protein resides in the nucleus. The catalysed reaction is ATP + H2O = ADP + phosphate + H(+). Functionally, ATP-dependent chromatin-remodeling factor that specifically binds to the promoter of target genes, leading to chromatin remodeling, possibly by promoting deposition of histone H3.3. Involved in myogenesis via interaction with MYOD1: binds to myogenic gene regulatory sequences and mediates incorporation of histone H3.3 prior to the onset of myogenic gene expression, promoting their expression. The chain is Chromodomain-helicase-DNA-binding protein 2 (Chd2) from Mus musculus (Mouse).